A 342-amino-acid chain; its full sequence is MTIALTGGGTGGHLAIVRCLLESAIKKNIECVYIGSQNGQDKAWFENEVRFKEKFFLSSKGVVNQSKFDKISSLLHTLKLSKDCREIFKKYHIQAVFSVGGYSAAPASFAALFSHLPLFIHEQNSKSGSLNMLLKPFATKFFSAFEKEISPYPVADKFFDNARIRKELKNIIFLGGSQGAQFINELALNLAPKLQEQNIKIIHQCGKNDFEKCKKHYQSLNIQADIFDFSLNLEEKMKNADLAISRAGASTLFELCANTLPAIFIPYPYAAKNHQYFNAKFLQDQALCQIFMQNSINLDEFFKSILKLNLENISTRLQNITQKNGADMLIQKALFDNLTFIR.

Residues 10-12 (TGG), Asn124, Ser177, and Gln275 each bind UDP-N-acetyl-alpha-D-glucosamine.

It belongs to the glycosyltransferase 28 family. MurG subfamily.

It is found in the cell inner membrane. It carries out the reaction di-trans,octa-cis-undecaprenyl diphospho-N-acetyl-alpha-D-muramoyl-L-alanyl-D-glutamyl-meso-2,6-diaminopimeloyl-D-alanyl-D-alanine + UDP-N-acetyl-alpha-D-glucosamine = di-trans,octa-cis-undecaprenyl diphospho-[N-acetyl-alpha-D-glucosaminyl-(1-&gt;4)]-N-acetyl-alpha-D-muramoyl-L-alanyl-D-glutamyl-meso-2,6-diaminopimeloyl-D-alanyl-D-alanine + UDP + H(+). The protein operates within cell wall biogenesis; peptidoglycan biosynthesis. Functionally, cell wall formation. Catalyzes the transfer of a GlcNAc subunit on undecaprenyl-pyrophosphoryl-MurNAc-pentapeptide (lipid intermediate I) to form undecaprenyl-pyrophosphoryl-MurNAc-(pentapeptide)GlcNAc (lipid intermediate II). This Campylobacter jejuni (strain RM1221) protein is UDP-N-acetylglucosamine--N-acetylmuramyl-(pentapeptide) pyrophosphoryl-undecaprenol N-acetylglucosamine transferase.